We begin with the raw amino-acid sequence, 381 residues long: Chymosin (381 aa).

Positions 1 to 16 are cleaved as a signal peptide; sequence MRCLVVLLAVFALSQG. A propeptide spans 17–58 (activation peptide); the sequence is AEITRIPLYKGKSLRKALKEHGLLEDFLQKQQYGISSKYSGF. A Peptidase A1 domain is found at 74-378; sequence YFGKIYLGTP…DRANNLVGLA (305 aa). Aspartate 92 is a catalytic residue. Disulfide bonds link cysteine 105-cysteine 110 and cysteine 265-cysteine 269. Aspartate 274 is an active-site residue. Cysteine 308 and cysteine 341 form a disulfide bridge.

Belongs to the peptidase A1 family. As to quaternary structure, monomer.

The enzyme catalyses Broad specificity similar to that of pepsin A. Clots milk by cleavage of a single 104-Ser-Phe-|-Met-Ala-107 bond in kappa-chain of casein.. Functionally, chymosin is synthesized in the mucosa of the abomasum (fourth stomach) of young (unweaned) ruminants. The enzyme hydrolyzes casein to paracasein. This Bos taurus (Bovine) protein is Chymosin (CYM).